Reading from the N-terminus, the 187-residue chain is GTP cyclohydrolase 1 (187 aa).

Zn(2+)-binding residues include Cys-76, His-79, and Cys-148.

Belongs to the GTP cyclohydrolase I family. In terms of assembly, toroid-shaped homodecamer, composed of two pentamers of five dimers.

The enzyme catalyses GTP + H2O = 7,8-dihydroneopterin 3'-triphosphate + formate + H(+). The protein operates within cofactor biosynthesis; 7,8-dihydroneopterin triphosphate biosynthesis; 7,8-dihydroneopterin triphosphate from GTP: step 1/1. The sequence is that of GTP cyclohydrolase 1 from Streptococcus agalactiae serotype III (strain NEM316).